Reading from the N-terminus, the 560-residue chain is Vanillyl-alcohol oxidase (560 aa).

The FAD-binding PCMH-type domain occupies 67 to 272 (DYFLASAIVA…TKIGIWLMPN (206 aa)). Residue tyrosine 108 is part of the active site. Histidine 422 carries the tele-8alpha-FAD histidine modification. Active-site residues include tyrosine 503 and arginine 504.

To bacterial flavocytochrome p-cresol methyl hydroxylase. In terms of assembly, homooctamer (tetramer of tightly interacting dimers). FAD serves as cofactor.

The protein resides in the peroxisome. It is found in the cytoplasm. The enzyme catalyses 4-hydroxy-3-methoxy-benzenemethanol + O2 = vanillin + H2O2. With respect to regulation, competitively inhibited by cinnamyl and coniferyl alcohols and by isoeugenol. Functionally, catalyzes the conversion of vanillin alcohol to vanillin, and also the conversion of a wide range of phenolic compounds bearing side chains of variable size at the para position of the aromatic ring. Crucial for the degradation of the secondary metabolites derived from the degradation of the lignin. Catalyzes besides the oxidation of 4-hydroxybenzyl alcohols, the oxidative deamination of 4-hydroxybenzylamines, the oxidative demethylation of 4-(methoxy-methyl)phenols and the oxidative hydration of 4-allylphenols. Most active with 4-allylphenols. This Penicillium simplicissimum protein is Vanillyl-alcohol oxidase (VAOA).